An 897-amino-acid chain; its full sequence is Alanine--tRNA ligase (897 aa).

The Zn(2+) site is built by histidine 581, histidine 585, cysteine 684, and histidine 688.

This sequence belongs to the class-II aminoacyl-tRNA synthetase family. Zn(2+) serves as cofactor.

The protein resides in the cytoplasm. It catalyses the reaction tRNA(Ala) + L-alanine + ATP = L-alanyl-tRNA(Ala) + AMP + diphosphate. Its function is as follows. Catalyzes the attachment of alanine to tRNA(Ala) in a two-step reaction: alanine is first activated by ATP to form Ala-AMP and then transferred to the acceptor end of tRNA(Ala). Also edits incorrectly charged Ser-tRNA(Ala) and Gly-tRNA(Ala) via its editing domain. This Mycobacterium sp. (strain KMS) protein is Alanine--tRNA ligase.